We begin with the raw amino-acid sequence, 346 residues long: Putative D-xylulose reductase (346 aa).

Cysteine 39, histidine 64, and glutamate 150 together coordinate Zn(2+).

This sequence belongs to the zinc-containing alcohol dehydrogenase family. It depends on Zn(2+) as a cofactor.

It catalyses the reaction xylitol + NAD(+) = D-xylulose + NADH + H(+). The polypeptide is Putative D-xylulose reductase (Rhizobium meliloti (strain 1021) (Ensifer meliloti)).